Reading from the N-terminus, the 707-residue chain is MTRRTSIERYRNIGISAHIDAGKTTTTERILFYTGITHKLGEVHEGAATMDWMEQEQERGITITSAATTAFWRGMAGNYPEHRINIIDTPGHVDFTIEVERSMRVLDGACMVYDSVGGVQPQSETVWRQANKYGVPRIAFVNKMDRVGADFFRVQRQIVERLKGDAVPIQIPVGAEDHFEGVVDLVKMKAIIWDDASQGVRFEYRDIPPELQAQAEQWREKMIEKAAEANEALLEKYLSGQPLSEDEIKSGLRARTVANEIVPMLCGSAFKNKGVQAMLDAVIDYLPSPADVPAIIGHDERDREIERHPADDEPFSALAFKIMTDPFVGQLVFFRVYSGVVKSGDSVLNPLKSKKERLGRILQMHANERREISEVYAGDIAAAVGIKEITTGDTLTDPAHVIILERMTFPEPVISQAVEPRTKADQEKMGIALNRLAQEDPSFRVRTDEESGQTIISGMGELHLEILVDRMKREFGVEANVGKPQVAYRETIRSTVTDVEGKFVKQSGGRGQYGHVVLKLEPQEQGKGYEFVDAIKGGVVPREFIPAVDRGVRETLNTGVLAGYPVVDVKVTLVFGSYHDVDSNENAFRMAASMAFKEGMRRAKPVLLEPMMHVEVETPEDFTGNVMGDLSSRRGMVQGMEDIAGGGGKLVRAEVPLAEMFGYSTSLRSLTQGRATYSMEFKHYAEAPRQVAEQIIAARGSGAAARG.

A tr-type G domain is found at 8–290 (ERYRNIGISA…AVIDYLPSPA (283 aa)). GTP-binding positions include 17–24 (AHIDAGKT), 88–92 (DTPGH), and 142–145 (NKMD).

This sequence belongs to the TRAFAC class translation factor GTPase superfamily. Classic translation factor GTPase family. EF-G/EF-2 subfamily.

It is found in the cytoplasm. Catalyzes the GTP-dependent ribosomal translocation step during translation elongation. During this step, the ribosome changes from the pre-translocational (PRE) to the post-translocational (POST) state as the newly formed A-site-bound peptidyl-tRNA and P-site-bound deacylated tRNA move to the P and E sites, respectively. Catalyzes the coordinated movement of the two tRNA molecules, the mRNA and conformational changes in the ribosome. The sequence is that of Elongation factor G 2 from Bordetella bronchiseptica (strain ATCC BAA-588 / NCTC 13252 / RB50) (Alcaligenes bronchisepticus).